The primary structure comprises 403 residues: Phosphoglycerate kinase (403 aa).

Substrate contacts are provided by residues 21–23, arginine 36, 59–62, arginine 119, and arginine 159; these read DFN and HLGR. ATP-binding positions include lysine 214, glycine 301, glutamate 332, and 359–362; that span reads GGDS.

The protein belongs to the phosphoglycerate kinase family. As to quaternary structure, monomer.

The protein resides in the cytoplasm. The catalysed reaction is (2R)-3-phosphoglycerate + ATP = (2R)-3-phospho-glyceroyl phosphate + ADP. The protein operates within carbohydrate degradation; glycolysis; pyruvate from D-glyceraldehyde 3-phosphate: step 2/5. The polypeptide is Phosphoglycerate kinase (Lactobacillus delbrueckii subsp. lactis).